We begin with the raw amino-acid sequence, 535 residues long: MRSLLLFTFSACVLLARALLAGGASSGGGDTGPGNRRREREALAAQKIEVLVLLPRDDSYLFSLARVRPAIEYALRSVEGNGTGRKLLPPGTRFQVAYEDSDCGNRALFSLVDRVAAARGAKPDLILGPVCEYAAAPVARLASHWDLPMLSAGALAAGFQHKDTEYSHLTRVAPAYAKMGEMMLALFRHHHWSRAALLYSDDKLERNCYFTLEGVHEVFQEEGLHTSAYNFDETKDLDLDDIVRYIQGSERVVIMCASGDTIRRIMLAVHRHGMTSGDYAFFNIELFNSSSYGDGSWKRGDKHDFEAKQAYSSLQTVTLLRTAKPEFEKFSMEVKSSVEKQGLNEEDYVNMFVEGFHDAILLYVLALHEVLRAGYSKKDGGKIIQQTWNRTFEGIAGQVSIDANGDRYGDFSVVAMTDTEAGTQEVIGDYFGKEGRFKMRSNVKYPWGSLKLRIDETRIVEHTNSSPCKSCGLEESAVTGIVVGALLGAGLLMAFYFFRKKYRITIERRNHQEESNIGKHRELREDSIRSHFSVA.

The first 26 residues, 1–26 (MRSLLLFTFSACVLLARALLAGGASS), serve as a signal peptide directing secretion. The propeptide occupies 27–40 (GGGDTGPGNRRRER). Over 41–477 (EALAAQKIEV…CKSCGLEESA (437 aa)) the chain is Extracellular. N-linked (GlcNAc...) asparagine glycosylation occurs at Asn-81. Cystine bridges form between Cys-103–Cys-131 and Cys-208–Cys-256. Asn-288 and Asn-389 each carry an N-linked (GlcNAc...) asparagine glycan. A helical transmembrane segment spans residues 478-498 (VTGIVVGALLGAGLLMAFYFF). Over 499–535 (RKKYRITIERRNHQEESNIGKHRELREDSIRSHFSVA) the chain is Cytoplasmic.

It belongs to the ANF receptor family. In terms of assembly, homodimer; disulfide-linked. Interacts with OSTN.

Its subcellular location is the cell membrane. Its function is as follows. Receptor for the natriuretic peptide hormones, binding with similar affinities atrial natriuretic peptide NPPA/ANP, brain natriuretic peptide NPPB/BNP, and C-type natriuretic peptide NPPC/CNP. May function as a clearance receptor for NPPA, NPPB and NPPC, regulating their local concentrations and effects. Acts as a regulator of osteoblast differentiation and bone growth by binding to its ligand osteocrin, thereby preventing binding between NPR3/NPR-C and natriuretic peptides, leading to increase cGMP production. The protein is Atrial natriuretic peptide receptor 3 (Npr3) of Rattus norvegicus (Rat).